The sequence spans 154 residues: Ribosomal RNA large subunit methyltransferase H (154 aa).

Residues leucine 71 and glycine 103 each coordinate S-adenosyl-L-methionine.

It belongs to the RNA methyltransferase RlmH family. Homodimer.

The protein localises to the cytoplasm. The catalysed reaction is pseudouridine(1915) in 23S rRNA + S-adenosyl-L-methionine = N(3)-methylpseudouridine(1915) in 23S rRNA + S-adenosyl-L-homocysteine + H(+). Its function is as follows. Specifically methylates the pseudouridine at position 1915 (m3Psi1915) in 23S rRNA. In Solidesulfovibrio magneticus (strain ATCC 700980 / DSM 13731 / RS-1) (Desulfovibrio magneticus), this protein is Ribosomal RNA large subunit methyltransferase H.